Consider the following 92-residue polypeptide: Progonadoliberin-1 (92 aa).

Positions 1–23 (MEKSRKILVGVLLFTASVAICLA) are cleaved as a signal peptide. At Gln24 the chain carries Pyrrolidone carboxylic acid. Gly33 carries the post-translational modification Glycine amide.

The protein belongs to the GnRH family.

The protein localises to the secreted. Stimulates the secretion of gonadotropins. This chain is Progonadoliberin-1 (GNRH1), found in Gallus gallus (Chicken).